A 471-amino-acid chain; its full sequence is L-lysine 2,3-aminomutase (471 aa).

Residues 120–332 (HRYPDRVLFL…GLRGHTSGYA (213 aa)) form the Radical SAM core domain. Residues Cys-134, Cys-138, and Cys-141 each contribute to the [4Fe-4S] cluster site. The residue at position 346 (Lys-346) is an N6-(pyridoxal phosphate)lysine.

Belongs to the radical SAM superfamily. KamA family. In terms of assembly, homotetramer. [4Fe-4S] cluster serves as cofactor. Pyridoxal 5'-phosphate is required as a cofactor.

The enzyme catalyses L-lysine = (3S)-3,6-diaminohexanoate. It functions in the pathway amino-acid degradation; L-lysine degradation via acetate pathway. Catalyzes the interconversion of L-alpha-lysine and L-beta-lysine. The chain is L-lysine 2,3-aminomutase (kamA) from Bacillus subtilis (strain 168).